The chain runs to 374 residues: MVLWESPRQCSSWTLCEGFCWLLLLPVTLLIIARPVKLAAFPTSLSDCQTPTGWNCSGYDDRENDLFLCDTNTCKFDGECLRIGDTVTCVCQFKCNSDYVPVCGSNGESYQNECYLRQAACKQQSEILVVSEGSCATDTGSGSGDGVHEGSGETSQKETSTCDICQFGAECDEDAEDVWCVCNIDCSQTNFNPLCASDGKSYDNACQIKEASCQKQEKIEVMSLGRCQDNTTTTTKSEDGHYARTDYAENANKLEESAREHHIPCPEHYNGFCMHGKCEHSINMQEPSCRCDAGYTGQHCEKKDYSVLYVVPGPVRFQYVLIAAVIGTIQIAVICVVVLCITRKCPRSNRIHRQKQNTGHYSSDNTTRASTRLI.

Positions 1 to 40 (MVLWESPRQCSSWTLCEGFCWLLLLPVTLLIIARPVKLAA) are cleaved as a signal peptide. Over 41 to 320 (FPTSLSDCQT…VPGPVRFQYV (280 aa)) the chain is Extracellular. Residue asparagine 55 is glycosylated (N-linked (GlcNAc...) asparagine). Kazal-like domains lie at 90 to 137 (VCQF…SCAT) and 181 to 229 (VCNI…RCQD). Intrachain disulfides connect cysteine 91/cysteine 121, cysteine 95/cysteine 114, cysteine 103/cysteine 135, cysteine 182/cysteine 213, cysteine 186/cysteine 206, and cysteine 195/cysteine 227. The N-linked (GlcNAc...) asparagine glycan is linked to asparagine 230. In terms of domain architecture, EGF-like spans 261–301 (HHIPCPEHYNGFCMHGKCEHSINMQEPSCRCDAGYTGQHCE). Cystine bridges form between cysteine 265–cysteine 278, cysteine 273–cysteine 289, and cysteine 291–cysteine 300. The tract at residues 303-320 (KDYSVLYVVPGPVRFQYV) is required for shedding. Residues 321 to 341 (LIAAVIGTIQIAVICVVVLCI) traverse the membrane as a helical segment. Residues 342-374 (TRKCPRSNRIHRQKQNTGHYSSDNTTRASTRLI) lie on the Cytoplasmic side of the membrane. Residues 353-374 (RQKQNTGHYSSDNTTRASTRLI) form a disordered region. Residues 356–374 (QNTGHYSSDNTTRASTRLI) show a composition bias toward polar residues.

The protein belongs to the tomoregulin family. Post-translationally, O-glycosylated; contains chondroitin sulfate glycosaminoglycans. A soluble form (TMEFF2-ECD) is produced by proteolytic shedding. This shedding can be induced by phorbol ester or pro-inflammatory cytokines such as TNFalpha, and is mediated by a metalloproteinase ADAM. Widely expressed in the brain. In the olfactory bulb expressed in mitral cell, granule, and glomerular layers. In the hippocampus expressed in hippocampal cornu ammonis, pyramidal layer, dentate gyrus, and substantia nigra pars compacta.

It localises to the membrane. In terms of biological role, may be a survival factor for hippocampal and mesencephalic neurons. The shedded form may up-regulate cell proliferation. The protein is Tomoregulin-2 (Tmeff2) of Mus musculus (Mouse).